Reading from the N-terminus, the 957-residue chain is MSRALDPHTDFIPRHIGPTAADQEKMLAAIGCGSLDALLQEVVPPAIRSQGPLALPASRSESDVLADLKAVAGRNRIYRNYIGQGYYGTHTPNVVLRNVLENPAWYTAYTPYQPEISQGRLEALLNYQTMVADLTGLDISNASLLDEGTAAAEAMTLARRGSKSASQVFFVSAHCHPQTIEVVRTRAEGLGIEVALGDEAQGLPECFGVLLQYPHSLGGVADYRALAEAAHAQGAVVACATDLLALALMTPPGEWGADIAIGSSQRFGVPFGFGGPHAGFMACKDAYKRNMPGRLVGVSKDAQGNPALRLALQTREQHIRREKATSNICTAQVLLAVMAGLYAVWHGPDGIRRIATRVHRYTAILRAALTQLGIKVVNDTFFDTLLLETGVATPAIVEAAVCEHINLRRVDGARLAVSLDETVTAADLQALVNVFAAGLQKDDLALDIDAHDAAAPGGIPAALQRQGGILAHPVFSSIQSETDMLRYLRKLADKDLALDRSMIPLGSCTMKLNATAEMIPITWPEFALIHPYAPADQSAGYRELIERLSKALCEITGYDDISLQPNSGAQGEYAGLLAIRGYHRANGQAQRNVCLIPASAHGTNPASAQLAGMEVVVVASDANGNVDLDDLRAKLTQVGDRLAALMITYPSTHGVFEESITHICDLVHQAGGQVYLDGANMNAMVGVARPGKFGSDVSHLNLHKTFCIPHGGGGPGVGPVAVRSHLAPFLPGVLNAQGKLGGETGIGPVAAAPYGSAGILPISYAYIALMGADGLRRATEVAILNANYVAARLRDYYPVLYAGRNGRVAHECILDVRPLKDSSGISAEDIAKRLMDYGFHAPTMSFPVAGTLMVEPTESEGLAELERFIDAMIAIREEIAQVERGERDRDDNVLKNAPHTAQMLLAEEWLHDYPRQQAAYPVASLRDAKYWPPVARVDNAYGDRNLVCACLPVEAYA.

Lys-704 is subject to N6-(pyridoxal phosphate)lysine.

Belongs to the GcvP family. In terms of assembly, the glycine cleavage system is composed of four proteins: P, T, L and H. Requires pyridoxal 5'-phosphate as cofactor.

The catalysed reaction is N(6)-[(R)-lipoyl]-L-lysyl-[glycine-cleavage complex H protein] + glycine + H(+) = N(6)-[(R)-S(8)-aminomethyldihydrolipoyl]-L-lysyl-[glycine-cleavage complex H protein] + CO2. Its function is as follows. The glycine cleavage system catalyzes the degradation of glycine. The P protein binds the alpha-amino group of glycine through its pyridoxal phosphate cofactor; CO(2) is released and the remaining methylamine moiety is then transferred to the lipoamide cofactor of the H protein. This chain is Glycine dehydrogenase (decarboxylating), found in Bordetella petrii (strain ATCC BAA-461 / DSM 12804 / CCUG 43448).